The primary structure comprises 425 residues: Trigger factor (425 aa).

The 74-residue stretch at G158–P231 folds into the PPIase FKBP-type domain.

It belongs to the FKBP-type PPIase family. Tig subfamily.

It localises to the cytoplasm. The enzyme catalyses [protein]-peptidylproline (omega=180) = [protein]-peptidylproline (omega=0). In terms of biological role, involved in protein export. Acts as a chaperone by maintaining the newly synthesized protein in an open conformation. Functions as a peptidyl-prolyl cis-trans isomerase. The protein is Trigger factor of Thermotoga neapolitana (strain ATCC 49049 / DSM 4359 / NBRC 107923 / NS-E).